The chain runs to 502 residues: uncharacterized protein (502 aa).

Low complexity-rich tracts occupy residues 1–10, 28–47, and 155–171; these read MQSTTNNNTN, SNRS…NNLS, and NTED…SVNS. Disordered regions lie at residues 1-57, 155-181, 212-362, and 438-487; these read MQST…VISY, NTED…LSAR, SLGN…TDKF, and TIDQ…TSNL. The span at 212–230 shows a compositional bias: polar residues; sequence SLGNSERNSPDRPSTQGDS. Composition is skewed to low complexity over residues 242-290 and 309-327; these read RNAS…SSRN and SNKN…TSIK. A compositionally biased stretch (polar residues) spans 339–348; it reads QTNKSKNQRG. The segment covering 446-460 has biased composition (low complexity); it reads TSDKNNSTKSNTKYN. Residues 470–487 are compositionally biased toward polar residues; that stretch reads SYGTSKRSHNRSSNTSNL.

It is found in the virion. This is an uncharacterized protein from Acanthamoeba polyphaga (Amoeba).